We begin with the raw amino-acid sequence, 79 residues long: MAKFASIVALLFAALVVFAAFEAPTVVEAKLCERSSGTWSGVCGNNNACKNQCIRLEGAQHGSCNYVFPAHKCICYFPC.

The signal sequence occupies residues 1–29; sequence MAKFASIVALLFAALVVFAAFEAPTVVEA. 4 disulfide bridges follow: cysteine 32/cysteine 79, cysteine 43/cysteine 64, cysteine 49/cysteine 73, and cysteine 53/cysteine 75.

The protein belongs to the DEFL family.

It is found in the secreted. In terms of biological role, possesses antifungal activity sensitive to inorganic cations. This chain is Defensin-like protein 3 (AFP3), found in Raphanus sativus (Radish).